Consider the following 96-residue polypeptide: Large ribosomal subunit protein bL27 (96 aa).

Residues methionine 1–phenylalanine 9 constitute a propeptide that is removed on maturation.

This sequence belongs to the bacterial ribosomal protein bL27 family. The N-terminus is cleaved by ribosomal processing cysteine protease Prp.

This Geobacillus sp. (strain WCH70) protein is Large ribosomal subunit protein bL27.